Reading from the N-terminus, the 62-residue chain is U-myrmeciitoxin(01)-Mg3a (62 aa).

The first 24 residues, 1-24, serve as a signal peptide directing secretion; it reads MKTTVILLLAIAIIFAIMTTLTSA.

As to expression, expressed by the venom gland.

The protein localises to the secreted. Functionally, may have antimicrobial properties, like most ant linear peptides. This Myrmecia gulosa (Red bulldog ant) protein is U-myrmeciitoxin(01)-Mg3a.